The primary structure comprises 290 residues: uncharacterized protein (290 aa).

This sequence belongs to the glycosyltransferase 2 family.

This is an uncharacterized protein from Methanocaldococcus jannaschii (strain ATCC 43067 / DSM 2661 / JAL-1 / JCM 10045 / NBRC 100440) (Methanococcus jannaschii).